We begin with the raw amino-acid sequence, 305 residues long: MKILMLCREPRLYSCQRLKQACQDRNIQLDILDPNRMLIKLAVIDAQMQAQLYYQAGEIYDKCRAEPSLLAEYDAVLPRFGVSSTMMGCRVLDYFAAKKVVILNNSTAFRLARDKWSSLQVLAAQHIPIPTSSFAGALFSTAAHISQHRIPLVIKTCSGSQGVGVMLSESKVHSVSLLQTLQQAKVDNLLQDFVVEARGQDIRAFVIGDRVVAAIERNGLENDFRANIHQGGSASVIQLNTAEQQLAVLAAKTIGLDVAGVDLIRSNKGLLVLEVNACPGLDGIEKASKLDIAGLIIDYLLAMKK.

One can recognise an ATP-grasp domain in the interval 119–301 (LQVLAAQHIP…IAGLIIDYLL (183 aa)). Residues lysine 155, 192-193 (DF), aspartate 201, and 225-227 (RAN) each bind ATP. Residues aspartate 262, glutamate 274, and asparagine 276 each contribute to the Mg(2+) site. Mn(2+)-binding residues include aspartate 262, glutamate 274, and asparagine 276.

The protein belongs to the RimK family. It depends on Mg(2+) as a cofactor. Mn(2+) is required as a cofactor.

This Haemophilus ducreyi (strain 35000HP / ATCC 700724) protein is Probable alpha-L-glutamate ligase.